Reading from the N-terminus, the 333-residue chain is 2-haloacrylate reductase (333 aa).

153–159 provides a ligand contact to NADP(+); sequence AAAGGMG.

The protein belongs to the zinc-containing alcohol dehydrogenase family.

It carries out the reaction (S)-2-chloropropanoate + NADP(+) = 2-chloroacrylate + NADPH + H(+). Its function is as follows. Involved in the degradation of unsaturated organohalogen compounds. Catalyzes the NADPH-dependent reduction of the carbon-carbon double bond of 2-chloroacrylate to produce (S)-2-chloropropionate, which is probably further metabolized to (R)-lactate by (S)-2-haloacid dehalogenase. Can also use 2-bromoacrylate as substrate. Does not act on acrylate, methacrylate, 1,4-benzoquinone and 1,4-naphthoquinone. This Burkholderia sp protein is 2-haloacrylate reductase.